The primary structure comprises 501 residues: Lysine--tRNA ligase (501 aa).

2 residues coordinate Mg(2+): Glu411 and Glu418.

Belongs to the class-II aminoacyl-tRNA synthetase family. Homodimer. The cofactor is Mg(2+).

The protein resides in the cytoplasm. The catalysed reaction is tRNA(Lys) + L-lysine + ATP = L-lysyl-tRNA(Lys) + AMP + diphosphate. The polypeptide is Lysine--tRNA ligase (Clostridium perfringens (strain 13 / Type A)).